The following is a 102-amino-acid chain: Small ribosomal subunit protein eS24 (102 aa).

This sequence belongs to the eukaryotic ribosomal protein eS24 family.

In Methanobrevibacter smithii (strain ATCC 35061 / DSM 861 / OCM 144 / PS), this protein is Small ribosomal subunit protein eS24.